A 312-amino-acid polypeptide reads, in one-letter code: Glyoxylate/hydroxypyruvate reductase A (312 aa).

The active site involves arginine 227. Histidine 275 (proton donor) is an active-site residue.

This sequence belongs to the D-isomer specific 2-hydroxyacid dehydrogenase family. GhrA subfamily.

The protein localises to the cytoplasm. The enzyme catalyses glycolate + NADP(+) = glyoxylate + NADPH + H(+). It catalyses the reaction (R)-glycerate + NAD(+) = 3-hydroxypyruvate + NADH + H(+). It carries out the reaction (R)-glycerate + NADP(+) = 3-hydroxypyruvate + NADPH + H(+). In terms of biological role, catalyzes the NADPH-dependent reduction of glyoxylate and hydroxypyruvate into glycolate and glycerate, respectively. This is Glyoxylate/hydroxypyruvate reductase A from Salmonella typhi.